Consider the following 190-residue polypeptide: Imidazoleglycerol-phosphate dehydratase (190 aa).

The protein belongs to the imidazoleglycerol-phosphate dehydratase family.

Its subcellular location is the cytoplasm. The enzyme catalyses D-erythro-1-(imidazol-4-yl)glycerol 3-phosphate = 3-(imidazol-4-yl)-2-oxopropyl phosphate + H2O. Its pathway is amino-acid biosynthesis; L-histidine biosynthesis; L-histidine from 5-phospho-alpha-D-ribose 1-diphosphate: step 6/9. This Methanococcus maripaludis (strain C5 / ATCC BAA-1333) protein is Imidazoleglycerol-phosphate dehydratase.